A 145-amino-acid chain; its full sequence is Conglutin (145 aa).

A signal peptide spans M1 to A21. 5 cysteine pairs are disulfide-bonded: C35–C92, C47–C79, C80–C128, C94–C136, and C105–C145.

It belongs to the 2S seed storage albumins family. As to expression, expressed in seeds. Not expressed in roots, pegs (budding ovaries) or leaves.

The chain is Conglutin from Arachis hypogaea (Peanut).